The chain runs to 1035 residues: FERM domain-containing protein 4B (1035 aa).

Residues 59 to 361 form the FERM domain; the sequence is RHCQVHLLDD…SQHQFYLDRK (303 aa). Phosphoserine is present on serine 372. 2 coiled-coil regions span residues 414–451 and 535–559; these read QDSEGMEEQKREKILELKKKEKLLQEKLLQKVEELKKI and KQDYTDAVKRLQEIENSINEYRIRC. The tract at residues 542–972 is necessary for adherens junction and tight junction localization; it reads VKRLQEIENS…TQLTIGLSEY (431 aa). Disordered stretches follow at residues 563-615, 631-699, 713-738, and 754-798; these read PSQK…ILPP, NEQF…LESQ, FTLSKSQRSSSTEILDDGSSYTSQSS, and TQTL…SKGQ. The segment covering 571-590 has biased composition (low complexity); it reads PPEDIIPSESSSLSDTTTYD. Positions 594–607 are enriched in polar residues; sequence DSFTLAGQRPSSVP. Serine 609 carries the phosphoserine modification. Residues 635 to 644 are compositionally biased toward basic and acidic residues; the sequence is MDTRHSREML. Composition is skewed to polar residues over residues 664–699 and 715–725; these read MPTTPVLTRNAYSSSHLEPDSSSQHCRQRSGSLESQ and LSKSQRSSSTE. Position 698 is a phosphoserine (serine 698). The segment covering 762–771 has biased composition (basic residues); it reads RGRRRSKKHS. The span at 772-782 shows a compositional bias: polar residues; it reads VSTSNSGSMPN. Lysine 883 participates in a covalent cross-link: Glycyl lysine isopeptide (Lys-Gly) (interchain with G-Cter in SUMO2). Disordered stretches follow at residues 906 to 926, 939 to 958, and 994 to 1035; these read RASGQKDQGHSPQTSFDSDRG, PCSPSSRASSYSSVSSTNAS, and PSRQ…GTLV. Residues 907–921 are compositionally biased toward polar residues; the sequence is ASGQKDQGHSPQTSF. A Phosphoserine modification is found at serine 916. A compositionally biased stretch (low complexity) spans 941–958; that stretch reads SPSSRASSYSSVSSTNAS. Basic and acidic residues predominate over residues 1019 to 1035; that stretch reads SEQRLFWHEDSKPGTLV. Residue lysine 1030 forms a Glycyl lysine isopeptide (Lys-Gly) (interchain with G-Cter in SUMO2) linkage.

As to quaternary structure, interacts with CYTH3. Interacts with PARD3. Interacts with CYTH1. As to expression, isoform 1 is expressed in the brain. Isoform 2 is expressed in the lung (at protein level).

The protein localises to the cytoplasm. Its subcellular location is the cytoskeleton. It localises to the cell junction. It is found in the tight junction. The protein resides in the adherens junction. Member of GRP1 signaling complexes that are acutely recruited to plasma membrane ruffles in response to insulin receptor signaling. May function as a scaffolding protein that regulates epithelial cell polarity by connecting ARF6 activation with the PAR3 complex. Plays a redundant role with FRMD4A in epithelial polarization. The chain is FERM domain-containing protein 4B (Frmd4b) from Mus musculus (Mouse).